Consider the following 178-residue polypeptide: Large ribosomal subunit protein bL25 (178 aa).

This sequence belongs to the bacterial ribosomal protein bL25 family. CTC subfamily. In terms of assembly, part of the 50S ribosomal subunit; part of the 5S rRNA/L5/L18/L25 subcomplex. Contacts the 5S rRNA. Binds to the 5S rRNA independently of L5 and L18.

Functionally, this is one of the proteins that binds to the 5S RNA in the ribosome where it forms part of the central protuberance. In Campylobacter lari (strain RM2100 / D67 / ATCC BAA-1060), this protein is Large ribosomal subunit protein bL25.